The chain runs to 257 residues: Small ribosomal subunit protein uS2 (257 aa).

The protein belongs to the universal ribosomal protein uS2 family.

The sequence is that of Small ribosomal subunit protein uS2 from Bartonella henselae (strain ATCC 49882 / DSM 28221 / CCUG 30454 / Houston 1) (Rochalimaea henselae).